The primary structure comprises 235 residues: Chromosome partition protein MukE (235 aa).

Residues 204-235 are disordered; the sequence is QQEPSQSSLLDGFDADDTGHHDSELTMQEGEV.

The protein belongs to the MukE family. Interacts, and probably forms a ternary complex, with MukF and MukB. The complex formation is stimulated by calcium or magnesium.

The protein resides in the cytoplasm. It is found in the nucleoid. Its function is as follows. Involved in chromosome condensation, segregation and cell cycle progression. May participate in facilitating chromosome segregation by condensation DNA from both sides of a centrally located replisome during cell division. Probably acts via its interaction with MukB and MukF. In Photobacterium profundum (strain SS9), this protein is Chromosome partition protein MukE.